We begin with the raw amino-acid sequence, 247 residues long: MSSSLFSYVVLLIFLFTIPYIQSQPTAPAPTTEKSPINLTAILEAGHQFTTLIQLLNTTQVGFQVSVQLNSSDQGMTIFAPTDNAFNKLKPGTLNSLTYQQQIQLMLYHIIPKYYSLSDLLLASNPVRTQATGQDGGVFGLNFTGQAQSNQVNVSTGVVETRINNALRQQFPLAVYVVDSVLLPEELFGTKTTPTGAPAPKSSTSSSDADSPAADDEHKSAGSSVKRTSLGIVVSFALFCCSVIYIA.

An N-terminal signal peptide occupies residues 1–23 (MSSSLFSYVVLLIFLFTIPYIQS). The region spanning 36–182 (PINLTAILEA…LAVYVVDSVL (147 aa)) is the FAS1 domain. N-linked (GlcNAc...) asparagine glycans are attached at residues Asn38, Asn57, Asn70, Asn142, and Asn153. The span at 192 to 212 (TTPTGAPAPKSSTSSSDADSP) shows a compositional bias: low complexity. Residues 192 to 221 (TTPTGAPAPKSSTSSSDADSPAADDEHKSA) form a disordered region. Gly222 carries the GPI-anchor amidated glycine lipid modification. Positions 223-247 (SSVKRTSLGIVVSFALFCCSVIYIA) are cleaved as a propeptide — removed in mature form.

Belongs to the fasciclin-like AGP family.

Its subcellular location is the cell membrane. Its function is as follows. May be a cell surface adhesion protein. This Arabidopsis thaliana (Mouse-ear cress) protein is Fasciclin-like arabinogalactan protein 6 (FLA6).